The primary structure comprises 510 residues: Probable mannosyl-oligosaccharide alpha-1,2-mannosidase 1B (510 aa).

The first 21 residues, 1-21 (MHFSSLSLPLTALSLVTPSLA), serve as a signal peptide directing secretion. 4 N-linked (GlcNAc...) asparagine glycosylation sites follow: N35, N95, N182, and N249. A disulfide bridge links C332 with C361. The N-linked (GlcNAc...) asparagine glycan is linked to N366. E375 functions as the Proton donor in the catalytic mechanism. T501 serves as a coordination point for Ca(2+).

Belongs to the glycosyl hydrolase 47 family. In terms of assembly, monomer. Ca(2+) is required as a cofactor. Requires Mg(2+) as cofactor.

It is found in the cytoplasmic vesicle lumen. It catalyses the reaction N(4)-(alpha-D-Man-(1-&gt;2)-alpha-D-Man-(1-&gt;2)-alpha-D-Man-(1-&gt;3)-[alpha-D-Man-(1-&gt;2)-alpha-D-Man-(1-&gt;3)-[alpha-D-Man-(1-&gt;2)-alpha-D-Man-(1-&gt;6)]-alpha-D-Man-(1-&gt;6)]-beta-D-Man-(1-&gt;4)-beta-D-GlcNAc-(1-&gt;4)-beta-D-GlcNAc)-L-asparaginyl-[protein] (N-glucan mannose isomer 9A1,2,3B1,2,3) + 4 H2O = N(4)-(alpha-D-Man-(1-&gt;3)-[alpha-D-Man-(1-&gt;3)-[alpha-D-Man-(1-&gt;6)]-alpha-D-Man-(1-&gt;6)]-beta-D-Man-(1-&gt;4)-beta-D-GlcNAc-(1-&gt;4)-beta-D-GlcNAc)-L-asparaginyl-[protein] (N-glucan mannose isomer 5A1,2) + 4 beta-D-mannose. The catalysed reaction is N(4)-(alpha-D-Man-(1-&gt;2)-alpha-D-Man-(1-&gt;2)-alpha-D-Man-(1-&gt;3)-[alpha-D-Man-(1-&gt;3)-[alpha-D-Man-(1-&gt;2)-alpha-D-Man-(1-&gt;6)]-alpha-D-Man-(1-&gt;6)]-beta-D-Man-(1-&gt;4)-beta-D-GlcNAc-(1-&gt;4)-beta-D-GlcNAc)-L-asparaginyl-[protein] (N-glucan mannose isomer 8A1,2,3B1,3) + 3 H2O = N(4)-(alpha-D-Man-(1-&gt;3)-[alpha-D-Man-(1-&gt;3)-[alpha-D-Man-(1-&gt;6)]-alpha-D-Man-(1-&gt;6)]-beta-D-Man-(1-&gt;4)-beta-D-GlcNAc-(1-&gt;4)-beta-D-GlcNAc)-L-asparaginyl-[protein] (N-glucan mannose isomer 5A1,2) + 3 beta-D-mannose. Its pathway is protein modification; protein glycosylation. Its function is as follows. Involved in the maturation of Asn-linked oligosaccharides. Progressively trims alpha-1,2-linked mannose residues from Man(9)GlcNAc(2) to produce Man(5)GlcNAc(2). In Aspergillus flavus (strain ATCC 200026 / FGSC A1120 / IAM 13836 / NRRL 3357 / JCM 12722 / SRRC 167), this protein is Probable mannosyl-oligosaccharide alpha-1,2-mannosidase 1B (mns1B).